Consider the following 86-residue polypeptide: Small ribosomal subunit protein uS17 (86 aa).

Belongs to the universal ribosomal protein uS17 family. As to quaternary structure, part of the 30S ribosomal subunit.

In terms of biological role, one of the primary rRNA binding proteins, it binds specifically to the 5'-end of 16S ribosomal RNA. This Rhizorhabdus wittichii (strain DSM 6014 / CCUG 31198 / JCM 15750 / NBRC 105917 / EY 4224 / RW1) (Sphingomonas wittichii) protein is Small ribosomal subunit protein uS17.